The primary structure comprises 1332 residues: DNA-directed RNA polymerase subunit beta' (1332 aa).

Zn(2+) contacts are provided by C60, C62, C75, and C78. Mg(2+) is bound by residues D535, D537, and D539. Residues C894, C977, C984, and C987 each contribute to the Zn(2+) site.

It belongs to the RNA polymerase beta' chain family. As to quaternary structure, the RNAP catalytic core consists of 2 alpha, 1 beta, 1 beta' and 1 omega subunit. When a sigma factor is associated with the core the holoenzyme is formed, which can initiate transcription. Mg(2+) is required as a cofactor. The cofactor is Zn(2+).

It catalyses the reaction RNA(n) + a ribonucleoside 5'-triphosphate = RNA(n+1) + diphosphate. Functionally, DNA-dependent RNA polymerase catalyzes the transcription of DNA into RNA using the four ribonucleoside triphosphates as substrates. The sequence is that of DNA-directed RNA polymerase subunit beta' from Corynebacterium kroppenstedtii (strain DSM 44385 / JCM 11950 / CIP 105744 / CCUG 35717).